The primary structure comprises 289 residues: MKTLPAMLGTGKLFWVFFLIPYLDIWNIHGKESCDVQLYIKRQSEHSILAGDPFELECPVKYCANRPHVTWCKLNGTTCVKLEDRQTSWKEEKNISFFILHFEPVLPNDNGSYRCSANFQSNLIESHSTTLYVTDVKSASERPSKDEMASRPWLLYRLLPLGGLPLLITTCFCLFCCLRRHQGKQNELSDTAGREINLVDAHLKSEQTEASTRQNSQVLLSETGIYDNDPDLCFRMQEGSEVYSNPCLEENKPGIVYASLNHSVIGPNSRLARNVKEAPTEYASICVRS.

Positions Met1–Gly30 are cleaved as a signal peptide. The Ig-like V-type domain maps to Lys31 to Tyr132. The Extracellular portion of the chain corresponds to Lys31–Arg157. Disulfide bonds link Cys34-Cys63, Cys58-Cys115, and Cys72-Cys79. Asn75, Asn94, and Asn110 each carry an N-linked (GlcNAc...) asparagine glycan. Residues Leu158 to Leu178 form a helical membrane-spanning segment. At Arg179–Ser289 the chain is on the cytoplasmic side.

In terms of assembly, interacts with tyrosine phosphatases PTPN6/SHP-1 and PTPN11/SHP-2. Interacts with TNFRSF14/HVEM (via cysteine-rich domain 1). Phosphorylated on Tyr residues by TNFRSF14 and by antigen receptors cross-linking, both inducing association with PTPN6 and PTPN11. Post-translationally, N-glycosylated.

Its subcellular location is the cell membrane. In terms of biological role, inhibitory receptor on lymphocytes that negatively regulates antigen receptor signaling via PTPN6/SHP-1 and PTPN11/SHP-2. May interact in cis (on the same cell) or in trans (on other cells) with TNFRSF14. In cis interactions, appears to play an immune regulatory role inhibiting in trans interactions in naive T cells to maintain a resting state. In trans interactions, can predominate during adaptive immune response to provide survival signals to effector T cells. This chain is B- and T-lymphocyte attenuator, found in Homo sapiens (Human).